The sequence spans 390 residues: Acid protease (390 aa).

Residues 1-18 form the signal peptide; sequence MLFSKSLLLSVLASLSFA. In terms of domain architecture, Peptidase A1 spans 75 to 386; the sequence is YLTTIEIGTP…DIDNSQVGIA (312 aa). Active-site residues include aspartate 93 and aspartate 282.

This sequence belongs to the peptidase A1 family.

This Saccharomycopsis fibuligera (Yeast) protein is Acid protease (PEP1).